Reading from the N-terminus, the 151-residue chain is SsrA-binding protein (151 aa).

Residues 132–151 (KRQTIKKRDQDREIHRKYGI) are disordered.

This sequence belongs to the SmpB family.

The protein localises to the cytoplasm. Functionally, required for rescue of stalled ribosomes mediated by trans-translation. Binds to transfer-messenger RNA (tmRNA), required for stable association of tmRNA with ribosomes. tmRNA and SmpB together mimic tRNA shape, replacing the anticodon stem-loop with SmpB. tmRNA is encoded by the ssrA gene; the 2 termini fold to resemble tRNA(Ala) and it encodes a 'tag peptide', a short internal open reading frame. During trans-translation Ala-aminoacylated tmRNA acts like a tRNA, entering the A-site of stalled ribosomes, displacing the stalled mRNA. The ribosome then switches to translate the ORF on the tmRNA; the nascent peptide is terminated with the 'tag peptide' encoded by the tmRNA and targeted for degradation. The ribosome is freed to recommence translation, which seems to be the essential function of trans-translation. In Lactobacillus gasseri (strain ATCC 33323 / DSM 20243 / BCRC 14619 / CIP 102991 / JCM 1131 / KCTC 3163 / NCIMB 11718 / NCTC 13722 / AM63), this protein is SsrA-binding protein.